The following is a 514-amino-acid chain: 3-octaprenyl-4-hydroxybenzoate carboxy-lyase (514 aa).

N177 provides a ligand contact to Mn(2+). Prenylated FMN is bound by residues 180-182 (IYR), 194-196 (RWL), and 199-200 (RG). E243 is a binding site for Mn(2+). D314 serves as the catalytic Proton donor.

Belongs to the UbiD family. As to quaternary structure, homohexamer. Prenylated FMN is required as a cofactor. Mn(2+) serves as cofactor.

The protein localises to the cell membrane. The catalysed reaction is a 4-hydroxy-3-(all-trans-polyprenyl)benzoate + H(+) = a 2-(all-trans-polyprenyl)phenol + CO2. Its pathway is cofactor biosynthesis; ubiquinone biosynthesis. Its function is as follows. Catalyzes the decarboxylation of 3-octaprenyl-4-hydroxy benzoate to 2-octaprenylphenol, an intermediate step in ubiquinone biosynthesis. The sequence is that of 3-octaprenyl-4-hydroxybenzoate carboxy-lyase from Bordetella pertussis (strain Tohama I / ATCC BAA-589 / NCTC 13251).